Reading from the N-terminus, the 349-residue chain is Dihydroorotate dehydrogenase (quinone) (349 aa).

FMN contacts are provided by residues 65–69 (AGFDK) and Ala89. Lys69 contributes to the substrate binding site. 114 to 118 (NRMGF) serves as a coordination point for substrate. Residues Asn143 and Asn176 each coordinate FMN. Asn176 lines the substrate pocket. Ser179 (nucleophile) is an active-site residue. Asn181 lines the substrate pocket. 2 residues coordinate FMN: Lys212 and Thr240. 241–242 (NT) serves as a coordination point for substrate. The tract at residues 244-265 (TERPESLSHPHAGEQGGLSGAP) is disordered. Basic and acidic residues predominate over residues 245–255 (ERPESLSHPHA). FMN is bound by residues Gly263, Gly290, and 311–312 (YT).

The protein belongs to the dihydroorotate dehydrogenase family. Type 2 subfamily. In terms of assembly, monomer. Requires FMN as cofactor.

It localises to the cell membrane. It carries out the reaction (S)-dihydroorotate + a quinone = orotate + a quinol. The protein operates within pyrimidine metabolism; UMP biosynthesis via de novo pathway; orotate from (S)-dihydroorotate (quinone route): step 1/1. In terms of biological role, catalyzes the conversion of dihydroorotate to orotate with quinone as electron acceptor. The chain is Dihydroorotate dehydrogenase (quinone) from Halobacterium salinarum (strain ATCC 29341 / DSM 671 / R1).